We begin with the raw amino-acid sequence, 545 residues long: Chaperonin GroEL (545 aa).

Residues threonine 30–proline 33, lysine 51, aspartate 87–threonine 91, glycine 415, and aspartate 495 contribute to the ATP site.

It belongs to the chaperonin (HSP60) family. In terms of assembly, forms a cylinder of 14 subunits composed of two heptameric rings stacked back-to-back. Interacts with the co-chaperonin GroES.

It is found in the cytoplasm. The catalysed reaction is ATP + H2O + a folded polypeptide = ADP + phosphate + an unfolded polypeptide.. Its function is as follows. Together with its co-chaperonin GroES, plays an essential role in assisting protein folding. The GroEL-GroES system forms a nano-cage that allows encapsulation of the non-native substrate proteins and provides a physical environment optimized to promote and accelerate protein folding. The sequence is that of Chaperonin GroEL from Shewanella sp. (strain ANA-3).